The following is a 519-amino-acid chain: Exodeoxyribonuclease 7 large subunit (519 aa).

The segment at 493-519 (AISTGKSSNTNRKSAPAREPGKQGSLF) is disordered. Residues 496 to 505 (TGKSSNTNRK) are compositionally biased toward polar residues.

It belongs to the XseA family. Heterooligomer composed of large and small subunits.

The protein localises to the cytoplasm. It carries out the reaction Exonucleolytic cleavage in either 5'- to 3'- or 3'- to 5'-direction to yield nucleoside 5'-phosphates.. Its function is as follows. Bidirectionally degrades single-stranded DNA into large acid-insoluble oligonucleotides, which are then degraded further into small acid-soluble oligonucleotides. In Chelativorans sp. (strain BNC1), this protein is Exodeoxyribonuclease 7 large subunit.